A 31-amino-acid chain; its full sequence is Aspartate racemase (31 aa).

The tract at residues 1 to 31 is disordered; the sequence is PVAPEYLFKKEEDKGANKEEEEVAPELGIRA. Residues 7–18 show a composition bias toward basic and acidic residues; that stretch reads LFKKEEDKGANK.

This sequence belongs to the aspartate/glutamate racemases family. It depends on pyridoxal 5'-phosphate as a cofactor.

It catalyses the reaction L-aspartate = D-aspartate. With respect to regulation, inhibited by hydroxylamine, aminooxyacetate, phenylhydrazine and sodium borohydride. Its function is as follows. Highly specific toward aspartate and entirely inactive on glutamate, alanine and serine. The chain is Aspartate racemase from Anadara broughtonii (Blood clam).